A 330-amino-acid polypeptide reads, in one-letter code: UPF0353 protein MAP_3434 (330 aa).

The next 2 membrane-spanning stretches (helical) occupy residues 21-41 (GMLL…VVQA) and 63-83 (LPIA…ATPT). A VWFA domain is found at 94–289 (VIMLVIDMSQ…GELQKSYNAI (196 aa)). A helical transmembrane segment spans residues 304–324 (AGWLRLGVLTALIATALALLI).

The protein belongs to the UPF0353 family.

The protein resides in the cell membrane. The protein is UPF0353 protein MAP_3434 of Mycolicibacterium paratuberculosis (strain ATCC BAA-968 / K-10) (Mycobacterium paratuberculosis).